A 106-amino-acid chain; its full sequence is Small ribosomal subunit protein bS20 (106 aa).

The segment at 1–32 (MAQKKPKRNLSALKRHRQSLKRRLRNKAKKSA) is disordered.

In terms of assembly, part of the 30S ribosomal subunit.

In terms of biological role, one of the primary rRNA binding proteins, it binds directly to 16S rRNA where it nucleates assembly of the bottom of the body of the 30S subunit, by binding to several RNA helices of the 16S rRNA. The sequence is that of Small ribosomal subunit protein bS20 (rpsT) from Thermus thermophilus (strain ATCC 27634 / DSM 579 / HB8).